The chain runs to 1480 residues: Cystic fibrosis transmembrane conductance regulator (1480 aa).

The Cytoplasmic segment spans residues 1 to 77 (MQRSPLEKAS…KLINALRRCF (77 aa)). Residues 78–98 (FWRFMFYGIFLYLGEVTKAVQ) form a helical membrane-spanning segment. In terms of domain architecture, ABC transmembrane type-1 1 spans 81 to 365 (FMFYGIFLYL…WAVQTWYDSL (285 aa)). Residues 99–122 (PLLLGRIIASYDPDNKEERSIAIY) are Extracellular-facing. The chain crosses the membrane as a helical span at residues 123–146 (LGIGLCLLFIVRTLLLHPAIFGLH). The Cytoplasmic segment spans residues 147-195 (HIGMQMRIAMFSLIYKKTLKLSSRVLDKISIGQLVSLLSNNLNKFDEGL). A helical transmembrane segment spans residues 196-216 (ALAHFVWIAPLQVALLMGLIW). At 217-222 (ELLQAS) the chain is on the extracellular side. The helical transmembrane segment at 223 to 243 (AFCGLGFLIVLALFQAGLGRM) threads the bilayer. The Cytoplasmic segment spans residues 244 to 298 (MMKYRDQRAGKISERLVITSEMIENIQSVKAYCWEEAMEKMIENLRQTELKLTRK). The chain crosses the membrane as a helical span at residues 299 to 319 (AAYVRYFNSSAFFFSGFFVVF). Topologically, residues 320–339 (LSVLPYALIKGIVLRKIFTT) are extracellular. Residues 340–358 (ISFCIVLRMAVTRQFPWAV) form a helical membrane-spanning segment. At 359–858 (QTWYDSLGAI…YLRYITVHKS (500 aa)) the chain is on the cytoplasmic side. ATP-binding positions include tryptophan 401, serine 434, 458–465 (GSTGAGKT), and glutamine 493. The ABC transporter 1 domain maps to 423–646 (NGDDSLFFSN…RPDFSSKLMG (224 aa)). Cysteine 524 carries S-palmitoyl cysteine lipidation. A phosphoserine mark is found at serine 549 and serine 660. The disordered R region stretch occupies residues 654 to 831 (SAERRNSILT…EEINEEDLKE (178 aa)). Serine 670 bears the Phosphoserine; by PKA mark. Serine 686 carries the phosphoserine modification. Lysine 688 is covalently cross-linked (Glycyl lysine isopeptide (Lys-Gly) (interchain with G-Cter in ubiquitin)). Phosphoserine occurs at positions 700 and 712. Threonine 717 carries the phosphothreonine modification. Phosphoserine occurs at positions 737, 753, 768, 790, 795, and 813. A helical transmembrane segment spans residues 859-879 (LIFVLIWCLVIFLAEVAASLV). In terms of domain architecture, ABC transmembrane type-1 2 spans 859 to 1155 (LIFVLIWCLV…AVNSSIDVDS (297 aa)). Over 880 to 918 (VLWLLGNTPLQDKGNSTHSRNNSYAVIITSTSSYYVFYI) the chain is Extracellular. Asparagine 894 and asparagine 900 each carry an N-linked (GlcNAc...) asparagine glycan. Residues 919–939 (YVGVADTLLAMGFFRGLPLVH) traverse the membrane as a discontinuously helical segment. Residues 940–990 (TLITVSKILHHKMLHSVLQAPMSTLNTLKAGGILNRFSKDIAILDDLLPLT) are Cytoplasmic-facing. A helical membrane pass occupies residues 991–1011 (IFDFIQLLLIVIGAIAVVAVL). Topologically, residues 1012-1013 (QP) are extracellular. Residues 1014-1034 (YIFVATVPVIVAFIMLRAYFL) traverse the membrane as a helical segment. Residues 1035–1095 (QTSQQLKQLE…TANWFLYLST (61 aa)) are Cytoplasmic-facing. The helical transmembrane segment at 1096 to 1116 (LRWFQMRIEMIFVMFFIAVTF) threads the bilayer. At 1117–1130 (ISILTTGEGEGRIG) the chain is on the extracellular side. The chain crosses the membrane as a helical span at residues 1131–1151 (IILTLAMNIMSTLQWAVNSSI). The Cytoplasmic segment spans residues 1152 to 1480 (DVDSLMRSVS…TEEEVQDTRL (329 aa)). An ABC transporter 2 domain is found at 1210–1443 (MTVKDLSAKY…RSLFRQAISP (234 aa)). Residues tyrosine 1219 and 1244–1251 (GRTGSGKS) contribute to the ATP site. The interaction with GORASP2 stretch occupies residues 1386-1480 (RTLKQAFADC…TEEEVQDTRL (95 aa)). The S-palmitoyl cysteine moiety is linked to residue cysteine 1395. 2 positions are modified to phosphoserine: serine 1444 and serine 1456. The segment at 1451–1480 (PHRNSSKGKSQPQIAALKEETEEEVQDTRL) is disordered. Over residues 1470–1480 (ETEEEVQDTRL) the composition is skewed to acidic residues. Positions 1478-1480 (TRL) match the PDZ-binding motif.

The protein belongs to the ABC transporter superfamily. ABCC family. CFTR transporter (TC 3.A.1.202) subfamily. In terms of assembly, monomer; does not require oligomerization for channel activity. May form oligomers in the membrane. Interacts with SLC26A3, SLC26A6 and NHERF1. Interacts with SHANK2. Interacts with MYO6. Interacts (via C-terminus) with GOPC (via PDZ domain); this promotes CFTR internalization and thereby decreases channel activity. Interacts with SLC4A7 through NHERF1. Found in a complex with MYO5B and RAB11A. Interacts with ANO1. Interacts with SLC26A8. Interacts with AHCYL1; the interaction increases CFTR activity. Interacts with CSE1L. The core-glycosylated form interacts with GORASP2 (via PDZ GRASP-type 1 domain) in respone to ER stress. Interacts with MARCHF2; the interaction leads to CFTR ubiqtuitination and degradation. Interacts with ADGRG2. In terms of processing, N-glycosylated. Post-translationally, phosphorylated; cAMP treatment promotes phosphorylation and activates the channel. Dephosphorylation decreases the ATPase activity (in vitro). Phosphorylation at PKA sites activates the channel. Phosphorylation at PKC sites enhances the response to phosphorylation by PKA. Phosphorylated by AMPK; this inhibits channel activity. Ubiquitinated, leading to its degradation in the lysosome. Deubiquitination by USP10 in early endosomes enhances its endocytic recycling to the cell membrane. Ubiquitinated by RNF185 during ER stress. Ubiquitinated by MARCHF2.

It localises to the apical cell membrane. The protein localises to the early endosome membrane. The protein resides in the cell membrane. It is found in the recycling endosome membrane. Its subcellular location is the endoplasmic reticulum membrane. It localises to the nucleus. It catalyses the reaction ATP + H2O + closed Cl(-) channel = ADP + phosphate + open Cl(-) channel.. The catalysed reaction is chloride(in) = chloride(out). It carries out the reaction hydrogencarbonate(in) = hydrogencarbonate(out). The enzyme catalyses ATP + H2O = ADP + phosphate + H(+). Functionally, epithelial ion channel that plays an important role in the regulation of epithelial ion and water transport and fluid homeostasis. Mediates the transport of chloride ions across the cell membrane. Possesses an intrinsic ATPase activity and utilizes ATP to gate its channel; the passive flow of anions through the channel is gated by cycles of ATP binding and hydrolysis by the ATP-binding domains. The ion channel is also permeable to HCO(3)(-); selectivity depends on the extracellular chloride concentration. Exerts its function also by modulating the activity of other ion channels and transporters. Contributes to the regulation of the pH and the ion content of the epithelial fluid layer. Modulates the activity of the epithelial sodium channel (ENaC) complex, in part by regulating the cell surface expression of the ENaC complex. May regulate bicarbonate secretion and salvage in epithelial cells by regulating the transporter SLC4A7. Can inhibit the chloride channel activity of ANO1. Plays a role in the chloride and bicarbonate homeostasis during sperm epididymal maturation and capacitation. The polypeptide is Cystic fibrosis transmembrane conductance regulator (Nomascus leucogenys (Northern white-cheeked gibbon)).